Reading from the N-terminus, the 592-residue chain is Frizzled-9 (592 aa).

The N-terminal stretch at 1-23 (MAVPPLLRGALLLWQLLATGGAA) is a signal peptide. Residues 24-230 (LEIGRFDPER…EVFWSRRDKD (207 aa)) are Extracellular-facing. Residues 35–156 (RGPAPCQAME…NDPHALCMEA (122 aa)) form the FZ domain. 5 disulfides stabilise this stretch: C40-C101, C48-C94, C85-C123, C112-C153, and C116-C140. The required for Wnt-activated receptor activity stretch occupies residues 59 to 173 (PNLLGHTSQG…PTEPHKGLGM (115 aa)). Residues 231–251 (FALVWMAVWSALCFFSTAFTV) form a helical membrane-spanning segment. Topologically, residues 252–267 (FTFLLEPHRFQYPERP) are cytoplasmic. A helical membrane pass occupies residues 268 to 288 (IIFLSMCYNVYSLAFLIRAVA). At 289–314 (GAQSVACDQEAGALYVIQEGLENTGC) the chain is on the extracellular side. A helical membrane pass occupies residues 315-335 (TLVFLLLYYFGMASSLWWVVL). Topologically, residues 336–356 (TLTWFLAAGKKWGHEAIEAHG) are cytoplasmic. The helical transmembrane segment at 357 to 377 (SYFHMAAWGLPALKTIVVLTL) threads the bilayer. The Extracellular segment spans residues 378-401 (RKVAGDELTGLCYVASMDPAALTG). The chain crosses the membrane as a helical span at residues 402–422 (FVLVPLSCYLVLGTSFLLTGF). At 423–448 (VALFHIRKIMKTGGTNTEKLEKLMVK) the chain is on the cytoplasmic side. Residues 449–469 (IGVFSILYTVPATCVIVCYVY) traverse the membrane as a helical segment. The Extracellular segment spans residues 470-509 (ERLNMDFWRLRATEQPCTAAAVPGGRRDCSLPGGSVPTVA). Residues 510 to 530 (VFMLKIFMSLVVGITSGVWVW) form a helical membrane-spanning segment. At 531 to 592 (SSKTFQTWQS…DPSLENPTHL (62 aa)) the chain is on the cytoplasmic side. The short motif at 533–538 (KTFQTW) is the Lys-Thr-X-X-X-Trp motif, mediates interaction with the PDZ domain of Dvl family members element. The required for CTNNB1 accumulation and TCF transcription factor activity stretch occupies residues 555 to 592 (ACRTPGGYGRGTHCHYKAPTVVLHMTKTDPSLENPTHL).

Belongs to the G-protein coupled receptor Fz/Smo family. Post-translationally, ubiquitinated by ZNRF3, leading to its degradation by the proteasome.

The protein localises to the cell membrane. Receptor for WNT2 that is coupled to the beta-catenin canonical signaling pathway, which leads to the activation of disheveled proteins, inhibition of GSK-3 kinase, nuclear accumulation of beta-catenin and activation of Wnt target genes. Plays a role in neuromuscular junction (NMJ) assembly by negatively regulating the clustering of acetylcholine receptors (AChR) through the beta-catenin canonical signaling pathway. May play a role in neural progenitor cells (NPCs) viability through the beta-catenin canonical signaling pathway by negatively regulating cell cycle arrest leading to inhibition of neuron apoptotic process. During hippocampal development, regulates neuroblast proliferation and apoptotic cell death. Controls bone formation through non canonical Wnt signaling mediated via ISG15. Positively regulates bone regeneration through non canonical Wnt signaling. The chain is Frizzled-9 from Rattus norvegicus (Rat).